The sequence spans 185 residues: Photosystem I assembly protein Ycf4 (185 aa).

The next 2 membrane-spanning stretches (helical) occupy residues 21–43 (NFCWAFLLFLGSLGFVLVGTSSY) and 63–85 (GLVMSFYGIAGLFISCYLWCTIL).

It belongs to the Ycf4 family.

It is found in the plastid. It localises to the chloroplast thylakoid membrane. Seems to be required for the assembly of the photosystem I complex. In Brassica oleracea (Wild cabbage), this protein is Photosystem I assembly protein Ycf4.